The chain runs to 431 residues: Putative F-box/FBD/LRR-repeat protein At4g26350 (431 aa).

Residues 1–47 (MDIISQCPDHLLLRILSFIPTKDVIVTSLLSKRWGSLWRWVPKLEYD) enclose the F-box domain. 5 LRR repeats span residues 52 to 78 (NMRFVKFVYRSLLQNNAPVLESLHLKN), 85 to 109 (CRTVDIGGWIDIAVSRRVRELEISI), 132 to 159 (ILTIKHCHLVDVPLAVCLPSLKKLHLRC), 160 to 185 (IGWAYNATLLRLISGCTNLEELRLAR), and 309 to 334 (CTQGWWDLLTHMLQGSPKLRFLTLTN). In terms of domain architecture, FBD spans 348–398 (CWKRPSSVPACLLSSLQAFTWSGYKGRQGDKEVVKYVLRNATGLKKRIFIS).

The chain is Putative F-box/FBD/LRR-repeat protein At4g26350 from Arabidopsis thaliana (Mouse-ear cress).